The chain runs to 447 residues: Serine/threonine-protein phosphatase 2A 55 kDa regulatory subunit B alpha isoform (447 aa).

Alanine 2 carries the post-translational modification N-acetylalanine. WD repeat units follow at residues 11–80 (QWCF…FQSH), 94–174 (EKIN…IFAN), 175–218 (AHTY…VDIK), 227–270 (EVIT…KLFE), 288–325 (ISDV…TYQV), 347–381 (ECCW…TLEA), and 414–446 (DFNK…QDKV).

Belongs to the phosphatase 2A regulatory subunit B family. As to quaternary structure, PP2A consists of a common heterodimeric core enzyme, composed of a 36 kDa catalytic subunit (subunit C) and a 65 kDa constant regulatory subunit (PR65 or subunit A), that associates with a variety of regulatory subunits. Proteins that associate with the core dimer include three families of regulatory subunits B (the R2/B/PR55/B55, R3/B''/PR72/PR130/PR59 and R5/B'/B56 families), the 48 kDa variable regulatory subunit, viral proteins, and cell signaling molecules. Interacts with the PP2A C catalytic subunit PPP2CA. Interacts with the PP2A A subunit PPP2R1A. Found in a complex with at least ARL2, PPP2CB, PPP2R1A, PPP2R2A, PPP2R5E and TBCD. Interacts with MFHAS1; the interaction is direct. Interacts with PABIR1/FAM122A (via its N-terminus); the interaction is direct and inhibits PP2A activity. Interacts with ARPP19; the interaction is direct and inhibits PP2A activity. Interacts with CRTC3. In terms of tissue distribution, brain.

Functionally, substrate-recognition subunit of protein phosphatase 2A (PP2A) that plays a key role in cell cycle by controlling mitosis entry and exit. Involved in chromosome clustering during late mitosis by mediating dephosphorylation of MKI67. Essential for serine/threonine-protein phosphatase 2A-mediated dephosphorylation of WEE1, preventing its ubiquitin-mediated proteolysis, increasing WEE1 protein levels, and promoting the G2/M checkpoint. The polypeptide is Serine/threonine-protein phosphatase 2A 55 kDa regulatory subunit B alpha isoform (Ppp2r2a) (Rattus norvegicus (Rat)).